Reading from the N-terminus, the 129-residue chain is Acyl carrier protein 2, chloroplastic (129 aa).

A chloroplast-targeting transit peptide spans 1–49 (MASAAASAVSFARPVKAICVNSVSFSALRKDNVSFRLQPVPQRFSVCCA). The Carrier domain maps to 52–127 (KETVEKVCDI…DAANLIDSLV (76 aa)). Position 87 is an O-(pantetheine 4'-phosphoryl)serine (S87).

It belongs to the acyl carrier protein (ACP) family. In terms of processing, 4'-phosphopantetheine is transferred from CoA to a specific serine of apo-ACP by acpS. This modification is essential for activity because fatty acids are bound in thioester linkage to the sulfhydryl of the prosthetic group.

The protein resides in the plastid. Its subcellular location is the chloroplast. It functions in the pathway lipid metabolism; fatty acid biosynthesis. Functionally, carrier of the growing fatty acid chain in fatty acid biosynthesis. This chain is Acyl carrier protein 2, chloroplastic (ACL1.2), found in Hordeum vulgare (Barley).